We begin with the raw amino-acid sequence, 632 residues long: Chaperone protein DnaK (632 aa).

Thr-198 is modified (phosphothreonine; by autocatalysis).

The protein belongs to the heat shock protein 70 family.

Its function is as follows. Acts as a chaperone. The protein is Chaperone protein DnaK of Rhodopseudomonas palustris (strain BisB18).